Reading from the N-terminus, the 83-residue chain is MKLTCVVIVAVLFLTAWTFVTADDSRYGLKNLFPKARHEMKNPEASKLNKRDECYPPGTFCGIKPGLCCSERCFPFVCLSLEF.

Positions 1–22 are cleaved as a signal peptide; it reads MKLTCVVIVAVLFLTAWTFVTA. The propeptide occupies 23-51; that stretch reads DDSRYGLKNLFPKARHEMKNPEASKLNKR. 3 cysteine pairs are disulfide-bonded: cysteine 54/cysteine 69, cysteine 61/cysteine 73, and cysteine 68/cysteine 78. Proline 57 and proline 65 each carry 4-hydroxyproline.

Belongs to the conotoxin O1 superfamily. As to expression, expressed by the venom duct.

Its subcellular location is the secreted. Its function is as follows. Delta-conotoxins bind to site 6 of voltage-gated sodium channels (Nav) and inhibit the inactivation process. The chain is Delta-conotoxin-like Ac6.2 from Conus achatinus (Little frog cone).